Here is a 4466-residue protein sequence, read N- to C-terminus: Dynein beta chain, ciliary (4466 aa).

The tract at residues Met-1–Lys-1813 is stem. Ala-154–Thr-161 lines the ATP pocket. 6 coiled-coil regions span residues Gln-482 to Leu-502, Gln-627 to Val-643, Val-734 to Gln-805, Thr-1036 to Glu-1056, Trp-1306 to Ala-1337, and Leu-1443 to Lys-1468. 4 AAA regions span residues Tyr-1814–Val-2035, Lys-2095–Lys-2316, Glu-2422–Gly-2669, and Thr-2767–Tyr-3016. ATP-binding positions include Gly-1852 to Thr-1859, Gly-2133 to Ser-2140, Gly-2460 to Ser-2467, and Gly-2805 to Gln-2812. Coiled coils occupy residues Ser-3033–Glu-3134, Glu-3263–Ile-3325, and Gln-3573–Lys-3642. The stalk stretch occupies residues Ser-3033–Ile-3325. 2 AAA regions span residues Leu-3409 to Val-3636 and Val-3846 to Asn-4072.

Belongs to the dynein heavy chain family. Consists of at least two heavy chains (alpha and beta), three intermediate chains and several light chains.

Its subcellular location is the cell projection. It is found in the cilium. The protein resides in the flagellum. It localises to the cytoplasm. The protein localises to the cytoskeleton. Its subcellular location is the flagellum axoneme. Functionally, force generating protein of eukaryotic cilia and flagella. Produces force towards the minus ends of microtubules. Dynein has ATPase activity; the force-producing power stroke is thought to occur on release of ADP. The polypeptide is Dynein beta chain, ciliary (Heliocidaris crassispina (Sea urchin)).